We begin with the raw amino-acid sequence, 432 residues long: Glutamate-1-semialdehyde 2,1-aminomutase (432 aa).

Lysine 269 carries the N6-(pyridoxal phosphate)lysine modification.

Belongs to the class-III pyridoxal-phosphate-dependent aminotransferase family. HemL subfamily. As to quaternary structure, homodimer. Requires pyridoxal 5'-phosphate as cofactor.

The protein resides in the cytoplasm. The enzyme catalyses (S)-4-amino-5-oxopentanoate = 5-aminolevulinate. It functions in the pathway porphyrin-containing compound metabolism; protoporphyrin-IX biosynthesis; 5-aminolevulinate from L-glutamyl-tRNA(Glu): step 2/2. The polypeptide is Glutamate-1-semialdehyde 2,1-aminomutase (Desulforamulus reducens (strain ATCC BAA-1160 / DSM 100696 / MI-1) (Desulfotomaculum reducens)).